We begin with the raw amino-acid sequence, 398 residues long: Isopenicillin N epimerase (398 aa).

At Lys-219 the chain carries N6-(pyridoxal phosphate)lysine. Residues 243–264 form a disordered region; it reads PQVSWGYRPDGENPSDERNRFG. The segment covering 251–264 has biased composition (basic and acidic residues); sequence PDGENPSDERNRFG.

It belongs to the class-V pyridoxal-phosphate-dependent aminotransferase family. Pyridoxal 5'-phosphate serves as cofactor.

The enzyme catalyses isopenicillin N = penicillin N. It participates in antibiotic biosynthesis; cephalosporin C biosynthesis. Functionally, catalyzes the reversible isomerization between isopenicillin N and penicillin N. The polypeptide is Isopenicillin N epimerase (cefD) (Amycolatopsis lactamdurans (Nocardia lactamdurans)).